Reading from the N-terminus, the 178-residue chain is ATP synthase subunit delta (178 aa).

Belongs to the ATPase delta chain family. As to quaternary structure, F-type ATPases have 2 components, F(1) - the catalytic core - and F(0) - the membrane proton channel. F(1) has five subunits: alpha(3), beta(3), gamma(1), delta(1), epsilon(1). F(0) has three main subunits: a(1), b(2) and c(10-14). The alpha and beta chains form an alternating ring which encloses part of the gamma chain. F(1) is attached to F(0) by a central stalk formed by the gamma and epsilon chains, while a peripheral stalk is formed by the delta and b chains.

Its subcellular location is the cell inner membrane. F(1)F(0) ATP synthase produces ATP from ADP in the presence of a proton or sodium gradient. F-type ATPases consist of two structural domains, F(1) containing the extramembraneous catalytic core and F(0) containing the membrane proton channel, linked together by a central stalk and a peripheral stalk. During catalysis, ATP synthesis in the catalytic domain of F(1) is coupled via a rotary mechanism of the central stalk subunits to proton translocation. In terms of biological role, this protein is part of the stalk that links CF(0) to CF(1). It either transmits conformational changes from CF(0) to CF(1) or is implicated in proton conduction. The polypeptide is ATP synthase subunit delta (Pseudomonas putida (strain ATCC 700007 / DSM 6899 / JCM 31910 / BCRC 17059 / LMG 24140 / F1)).